The sequence spans 84 residues: U8-theraphotoxin-Hhn1c 1 (84 aa).

The N-terminal stretch at 1–21 is a signal peptide; it reads MKVVLIVCLVWVMAMMELVSC. 5 disulfides stabilise this stretch: C23/C35, C29/C44, C34/C67, C54/C75, and C69/C81.

Belongs to the AVIT (prokineticin) family. In terms of tissue distribution, expressed by the venom gland.

Its subcellular location is the secreted. In Cyriopagopus hainanus (Chinese bird spider), this protein is U8-theraphotoxin-Hhn1c 1.